The chain runs to 890 residues: uncharacterized protein (890 aa).

Residues 1–20 (MKILKSLVLLVLFMAMPAKA) form the signal peptide. A run of 6 helical transmembrane segments spans residues 518–538 (AALT…ALKL), 567–587 (TYFF…VVGA), 613–633 (LLFI…IITI), 651–671 (VIAF…IILM), 684–704 (ISTL…FLLI), and 775–795 (FLVL…SYGL). Residues 860–890 (KARKPEGGEHTNKFLAERNDVPKKEEGERKE) are disordered. A compositionally biased stretch (basic and acidic residues) spans 862 to 890 (RKPEGGEHTNKFLAERNDVPKKEEGERKE).

Belongs to the TrbL/VirB6 family.

Its subcellular location is the cell membrane. This is an uncharacterized protein from Rickettsia felis (strain ATCC VR-1525 / URRWXCal2) (Rickettsia azadi).